Reading from the N-terminus, the 100-residue chain is Urease subunit gamma (100 aa).

This sequence belongs to the urease gamma subunit family. Heterotrimer of UreA (gamma), UreB (beta) and UreC (alpha) subunits. Three heterotrimers associate to form the active enzyme.

It localises to the cytoplasm. The catalysed reaction is urea + 2 H2O + H(+) = hydrogencarbonate + 2 NH4(+). The protein operates within nitrogen metabolism; urea degradation; CO(2) and NH(3) from urea (urease route): step 1/1. In Acetivibrio thermocellus (strain ATCC 27405 / DSM 1237 / JCM 9322 / NBRC 103400 / NCIMB 10682 / NRRL B-4536 / VPI 7372) (Clostridium thermocellum), this protein is Urease subunit gamma.